We begin with the raw amino-acid sequence, 248 residues long: tRNA pseudouridine synthase A (248 aa).

Aspartate 52 (nucleophile) is an active-site residue. Substrate is bound at residue tyrosine 111.

Belongs to the tRNA pseudouridine synthase TruA family. Homodimer.

The enzyme catalyses uridine(38/39/40) in tRNA = pseudouridine(38/39/40) in tRNA. Its function is as follows. Formation of pseudouridine at positions 38, 39 and 40 in the anticodon stem and loop of transfer RNAs. The sequence is that of tRNA pseudouridine synthase A from Methylocella silvestris (strain DSM 15510 / CIP 108128 / LMG 27833 / NCIMB 13906 / BL2).